A 459-amino-acid polypeptide reads, in one-letter code: ATP-dependent protease ATPase subunit HslU (459 aa).

ATP is bound by residues V21, 63–68 (GVGKTE), D273, E338, and R410.

Belongs to the ClpX chaperone family. HslU subfamily. A double ring-shaped homohexamer of HslV is capped on each side by a ring-shaped HslU homohexamer. The assembly of the HslU/HslV complex is dependent on binding of ATP.

The protein resides in the cytoplasm. ATPase subunit of a proteasome-like degradation complex; this subunit has chaperone activity. The binding of ATP and its subsequent hydrolysis by HslU are essential for unfolding of protein substrates subsequently hydrolyzed by HslV. HslU recognizes the N-terminal part of its protein substrates and unfolds these before they are guided to HslV for hydrolysis. This chain is ATP-dependent protease ATPase subunit HslU, found in Thermosipho africanus (strain TCF52B).